A 374-amino-acid polypeptide reads, in one-letter code: Glutamine synthetase (374 aa).

The segment at 2 to 25 (TTSASSHLNKGIKQVYMSLPQGEK) is required for glutamine-induced ubiquitination by CRL4(CRBN) and proteasomal degradation. Residues Lys-11 and Lys-14 each carry the N6-acetyllysine modification. The region spanning 24–106 (EKVQAMYIWI…VLCESFQVQF (83 aa)) is the GS beta-grasp domain. Positions 114-374 (LRHTCKRIMD…TGDEPFQYKN (261 aa)) constitute a GS catalytic domain. ATP is bound at residue Glu-135. Positions 135, 137, 197, and 204 each coordinate Mn(2+). 204–209 (EFQIGP) contributes to the ATP binding site. 247–248 (NW) contributes to the L-glutamate binding site. Mn(2+) is bound at residue His-254. ATP-binding positions include 256-258 (NFS), Arg-320, and Arg-325. Arg-320 serves as a coordination point for L-glutamate. ADP is bound at residue 337 to 339 (YFE). Glu-339 contacts Mn(2+). Arg-341 contacts L-glutamate. Ser-344 is modified (phosphoserine).

The protein belongs to the glutamine synthetase family. Decamer; composed of two pentamers. Interacts with PALMD. Interacts with RHOJ. Interacts with BEST2; this interaction tethers a fraction of GLUL to the membrane, causing a decrease of cytosolic glutamine synthase (GS) activity and inhibits the chloride channel activity of BEST2 by affecting the gating at the aperture in the absence of intracellular glutamate. The cofactor is Mg(2+). Mn(2+) is required as a cofactor. In terms of processing, palmitoylated; undergoes autopalmitoylation. Acetylated by EP300/p300; acetylation is stimulated by increased glutamine levels and promotes ubiquitin-mediated proteasomal degradation. Post-translationally, ubiquitinated by ZNRF1. Ubiquitinated by the DCX (DDB1-CUL4-X-box) E3 ubiquitin-protein ligase complex called CRL4(CRBN), leading to proteasomal degradation.

It is found in the cytoplasm. The protein resides in the cytosol. Its subcellular location is the microsome. It localises to the mitochondrion. The protein localises to the cell membrane. It carries out the reaction L-glutamate + NH4(+) + ATP = L-glutamine + ADP + phosphate + H(+). It catalyses the reaction L-cysteinyl-[protein] + hexadecanoyl-CoA = S-hexadecanoyl-L-cysteinyl-[protein] + CoA. Glutamine synthetase activity is inhibited by methionine sulfoximine (MSO). Glutamine synthetase that catalyzes the ATP-dependent conversion of glutamate and ammonia to glutamine. Its role depends on tissue localization: in the brain, it regulates the levels of toxic ammonia and converts neurotoxic glutamate to harmless glutamine, whereas in the liver, it is one of the enzymes responsible for the removal of ammonia. Plays a key role in ammonium detoxification during erythropoiesis: the glutamine synthetase activity is required to remove ammonium generated by porphobilinogen deaminase (HMBS) during heme biosynthesis to prevent ammonium accumulation and oxidative stress. Essential for proliferation of fetal skin fibroblasts. Independently of its glutamine synthetase activity, required for endothelial cell migration during vascular development. Involved in angiogenesis by regulating membrane localization and activation of the GTPase RHOJ, possibly by promoting RHOJ palmitoylation. May act as a palmitoyltransferase for RHOJ: able to autopalmitoylate and then transfer the palmitoyl group to RHOJ. Plays a role in ribosomal 40S subunit biogenesis. Through the interaction with BEST2, inhibits BEST2 channel activity by affecting the gating at the aperture in the absence of intracellular L-glutamate, but sensitizes BEST2 to intracellular L-glutamate, which promotes the opening of BEST2 and thus relieves its inhibitory effect on BEST2. The polypeptide is Glutamine synthetase (Macaca fascicularis (Crab-eating macaque)).